The sequence spans 527 residues: MASQEKASMAGHMFDVVVIGGGISGLSAAKLLAEHETNVLVLEARDRVGGRTYTVRNKHVNYVDVGGAYVGPTQNRILRLSKELGLETYKVNVNERLVQYVKGKSYPFRGAFPPVWNPIAYLDYNNLWRTMDNMGKEIPADAPWEAPHAEEWDKMTMKDLIDKICWTKTARQFASLFVNINVTSEPHQVSALWFLWYVKQCGGTTRIFSITNGGQERKFVGGSGQVSERIMELLGDRVKLEHPVTYVDQSGDNIIVETLNHEHFECKYVISAIPPALTAKIHFKPELPSERNQLIQRLPMGAIIKCMMYYKEAFWKKKDYCGSMIIEDEEAPISITLDDSKPDGSLPAIMGFILARKADRLAKLHKEMRKKKICELYAKVLGSQEALQPVHYEEKNWCEEQYSGGCYTAYFPPGIMTQYGRVIRQPVGRIYFAGTETATRWSGYMEGAVEAGERAAREILNALGKVAEKDIWLQEPESKDVPAVEITHSFWERNLPSVGGLLKIIGFSTSITALWIVVYKFKLLTRS.

Met1 is subject to N-acetylmethionine. Residues Met1 to Ser497 are Cytoplasmic-facing. Ser383 bears the Phosphoserine mark. Cys406 carries the S-8alpha-FAD cysteine modification. Residues Val498 to Val518 form a helical; Anchor for type IV membrane protein membrane-spanning segment. At Tyr519–Ser527 the chain is on the mitochondrial intermembrane side. The interaction with membrane phospholipid headgroups stretch occupies residues Lys520–Lys522.

Belongs to the flavin monoamine oxidase family. As to quaternary structure, monomer, homo- or heterodimer (containing two subunits of similar size). Each subunit contains a covalently bound flavin. Enzymatically active as monomer. FAD serves as cofactor.

The protein resides in the mitochondrion outer membrane. The enzyme catalyses a secondary aliphatic amine + O2 + H2O = a primary amine + an aldehyde + H2O2. It catalyses the reaction a primary methyl amine + O2 + H2O = an aldehyde + H2O2 + NH4(+). It carries out the reaction (R)-adrenaline + O2 + H2O = (R)-3,4-dihydroxymandelaldehyde + methylamine + H2O2. The catalysed reaction is dopamine + O2 + H2O = 3,4-dihydroxyphenylacetaldehyde + H2O2 + NH4(+). The enzyme catalyses tyramine + O2 + H2O = (4-hydroxyphenyl)acetaldehyde + H2O2 + NH4(+). It catalyses the reaction (R)-noradrenaline + O2 + H2O = (R)-3,4-dihydroxymandelaldehyde + H2O2 + NH4(+). It carries out the reaction serotonin + O2 + H2O = (5-hydroxyindol-3-yl)acetaldehyde + H2O2 + NH4(+). The catalysed reaction is kynuramine + O2 + H2O = 3-(2-aminophenyl)-3-oxopropanal + H2O2 + NH4(+). The enzyme catalyses tryptamine + O2 + H2O = indole-3-acetaldehyde + H2O2 + NH4(+). It catalyses the reaction 2-phenylethylamine + O2 + H2O = 2-phenylacetaldehyde + H2O2 + NH4(+). In terms of biological role, catalyzes the oxidative deamination of primary and some secondary amine such as neurotransmitters, with concomitant reduction of oxygen to hydrogen peroxide and has important functions in the metabolism of neuroactive and vasoactive amines in the central nervous system and peripheral tissues. Preferentially oxidizes serotonin. Also catalyzes the oxidative deamination of kynuramine to 3-(2-aminophenyl)-3-oxopropanal that can spontaneously condense to 4-hydroxyquinoline. This Equus caballus (Horse) protein is Amine oxidase [flavin-containing] A.